The primary structure comprises 191 residues: Protein Ves (191 aa).

This sequence belongs to the Ves family.

The chain is Protein Ves from Citrobacter koseri (strain ATCC BAA-895 / CDC 4225-83 / SGSC4696).